The following is a 271-amino-acid chain: 5-deoxy-glucuronate isomerase (271 aa).

It belongs to the isomerase IolB family.

It catalyses the reaction 5-deoxy-D-glucuronate = 5-dehydro-2-deoxy-D-gluconate. The protein operates within polyol metabolism; myo-inositol degradation into acetyl-CoA; acetyl-CoA from myo-inositol: step 4/7. Functionally, involved in the isomerization of 5-deoxy-glucuronate (5DG) to 5-dehydro-2-deoxy-D-gluconate (DKG or 2-deoxy-5-keto-D-gluconate). This Shouchella clausii (strain KSM-K16) (Alkalihalobacillus clausii) protein is 5-deoxy-glucuronate isomerase.